The chain runs to 74 residues: Histone H1.C8/H1.M1 (74 aa).

Residues 1-74 form a disordered region; that stretch reads MSDAAVPPKK…KAVKKAPKKK (74 aa). Residues 11–74 are compositionally biased toward basic residues; sequence ASPKKAAAKK…KAVKKAPKKK (64 aa).

The protein resides in the nucleus. Its subcellular location is the chromosome. The sequence is that of Histone H1.C8/H1.M1 from Trypanosoma cruzi.